Consider the following 336-residue polypeptide: MAKRMITTELMEEDVKLETSLRPQMLEDYIGQKKAKENLKVYIEAAKQRKESLDHVLFFGPPGLGKTTLAGIIANEMGVNLKTTAGPAIEKPGDMAAILNNLQEGDVLFIDEIHRLNRQVEELLYPAMEDYVIDIVIGKGATAKSIRLDLPRFTLVGATTRAGMLTAPLRDRFGVVHRLEFYTTEELKEIITRSAKVLQVEIDDCGATELARRSRGTPRLANRLLKRVRDFAQVKYDGRITEEVARFALDILEVDKLGLDHIDRQILVTMIEKFAGGPVGIDAIATTIGEDSGTVEEVYEPYLVQNGLILRTPRGRVVTQEAYLHCGLPYENKELS.

The interval 1–182 (MAKRMITTEL…FGVVHRLEFY (182 aa)) is large ATPase domain (RuvB-L). ATP-binding positions include L21, R22, G63, K66, T67, T68, 129-131 (EDY), R172, Y182, and R219. T67 contributes to the Mg(2+) binding site. Residues 183–253 (TTEELKEIIT…VARFALDILE (71 aa)) form a small ATPAse domain (RuvB-S) region. Residues 256–336 (KLGLDHIDRQ…GLPYENKELS (81 aa)) are head domain (RuvB-H). Positions 311 and 316 each coordinate DNA.

This sequence belongs to the RuvB family. Homohexamer. Forms an RuvA(8)-RuvB(12)-Holliday junction (HJ) complex. HJ DNA is sandwiched between 2 RuvA tetramers; dsDNA enters through RuvA and exits via RuvB. An RuvB hexamer assembles on each DNA strand where it exits the tetramer. Each RuvB hexamer is contacted by two RuvA subunits (via domain III) on 2 adjacent RuvB subunits; this complex drives branch migration. In the full resolvosome a probable DNA-RuvA(4)-RuvB(12)-RuvC(2) complex forms which resolves the HJ.

Its subcellular location is the cytoplasm. It carries out the reaction ATP + H2O = ADP + phosphate + H(+). Its function is as follows. The RuvA-RuvB-RuvC complex processes Holliday junction (HJ) DNA during genetic recombination and DNA repair, while the RuvA-RuvB complex plays an important role in the rescue of blocked DNA replication forks via replication fork reversal (RFR). RuvA specifically binds to HJ cruciform DNA, conferring on it an open structure. The RuvB hexamer acts as an ATP-dependent pump, pulling dsDNA into and through the RuvAB complex. RuvB forms 2 homohexamers on either side of HJ DNA bound by 1 or 2 RuvA tetramers; 4 subunits per hexamer contact DNA at a time. Coordinated motions by a converter formed by DNA-disengaged RuvB subunits stimulates ATP hydrolysis and nucleotide exchange. Immobilization of the converter enables RuvB to convert the ATP-contained energy into a lever motion, pulling 2 nucleotides of DNA out of the RuvA tetramer per ATP hydrolyzed, thus driving DNA branch migration. The RuvB motors rotate together with the DNA substrate, which together with the progressing nucleotide cycle form the mechanistic basis for DNA recombination by continuous HJ branch migration. Branch migration allows RuvC to scan DNA until it finds its consensus sequence, where it cleaves and resolves cruciform DNA. The sequence is that of Holliday junction branch migration complex subunit RuvB from Lachnoclostridium phytofermentans (strain ATCC 700394 / DSM 18823 / ISDg) (Clostridium phytofermentans).